A 144-amino-acid polypeptide reads, in one-letter code: Arginine decarboxylase proenzyme (144 aa).

Ser-80 serves as the catalytic Schiff-base intermediate with substrate; via pyruvic acid. Ser-80 bears the Pyruvic acid (Ser); by autocatalysis mark. The active-site Proton acceptor; for processing activity is His-85. Cys-100 acts as the Proton donor; for catalytic activity in catalysis.

The protein belongs to the prokaryotic AdoMetDC family. Type 1 subfamily. Heterooctamer of four alpha and four beta chains arranged as a tetramer of alpha/beta heterodimers. The cofactor is pyruvate. Post-translationally, is synthesized initially as an inactive proenzyme. Formation of the active enzyme involves a self-maturation process in which the active site pyruvoyl group is generated from an internal serine residue via an autocatalytic post-translational modification. Two non-identical subunits are generated from the proenzyme in this reaction, and the pyruvate is formed at the N-terminus of the alpha chain, which is derived from the carboxyl end of the proenzyme. The post-translation cleavage follows an unusual pathway, termed non-hydrolytic serinolysis, in which the side chain hydroxyl group of the serine supplies its oxygen atom to form the C-terminus of the beta chain, while the remainder of the serine residue undergoes an oxidative deamination to produce ammonia and the pyruvoyl group blocking the N-terminus of the alpha chain.

The enzyme catalyses L-arginine + H(+) = agmatine + CO2. The protein operates within amine and polyamine biosynthesis; agmatine biosynthesis; agmatine from L-arginine: step 1/1. Its function is as follows. Specifically catalyzes the decarboxylation of L-arginine to agmatine. Has no S-adenosylmethionine decarboxylase (AdoMetDC) activity. This is Arginine decarboxylase proenzyme from Ignicoccus hospitalis (strain KIN4/I / DSM 18386 / JCM 14125).